A 216-amino-acid polypeptide reads, in one-letter code: MAKSLLCSSTLNPFFSTTLSSSKKNQIAYSGNSKNQTSSSLLWKRRELSLGFMSSLVAIGLVSNDRRRHDANAAILEADDDEELLEKVKQDRKKRIERQAVLNSAVKEKGYLQDLVYKLSKVGQAIENNDLPAAGLVLGKGIDTEWVKTVNLAFTKLSTSPEENTEVEAFNSSLASLITSVNKNDIESSKLAFVSSAGAFEKWTTLTGLLEQLKGL.

The transit peptide at 1–38 directs the protein to the chloroplast; that stretch reads MAKSLLCSSTLNPFFSTTLSSSKKNQIAYSGNSKNQTS. The N-terminal 35 residues, 39-73, are a transit peptide targeting the thylakoid; that stretch reads SSLLWKRRELSLGFMSSLVAIGLVSNDRRRHDANA.

It is found in the plastid. The protein resides in the chloroplast thylakoid lumen. The protein is Thylakoid lumenal 16.5 kDa protein, chloroplastic of Arabidopsis thaliana (Mouse-ear cress).